Here is a 486-residue protein sequence, read N- to C-terminus: uncharacterized protein (486 aa).

NAD(+) is bound at residue 24-35 (IVHLGFGAFHRA).

It belongs to the mannitol dehydrogenase family. UxuB subfamily.

This is an uncharacterized protein from Escherichia coli (strain K12).